The sequence spans 298 residues: Protease HtpX homolog (298 aa).

2 helical membrane-spanning segments follow: residues isoleucine 14 to leucine 34 and valine 39 to glycine 59. Residue histidine 144 coordinates Zn(2+). Residue glutamate 145 is part of the active site. Histidine 148 lines the Zn(2+) pocket. 2 helical membrane-spanning segments follow: residues isoleucine 159–tryptophan 179 and isoleucine 195–alanine 215. Glutamate 224 is a Zn(2+) binding site.

It belongs to the peptidase M48B family. Zn(2+) serves as cofactor.

It localises to the cell membrane. In Limosilactobacillus reuteri (strain DSM 20016) (Lactobacillus reuteri), this protein is Protease HtpX homolog.